The primary structure comprises 318 residues: D-alanine--D-alanine ligase (318 aa).

The ATP-grasp domain maps to 101-307 (KKIIQYEGLP…FPDLIEKLVE (207 aa)). Position 135–190 (135–190 (CREMGLPLVVKAPTQGSTIGMSFVHKEEDMAGALELAYDYDPVALVEQFIRGTEVT)) interacts with ATP. Residues Asp-261, Glu-274, and Asn-276 each contribute to the Mg(2+) site.

This sequence belongs to the D-alanine--D-alanine ligase family. It depends on Mg(2+) as a cofactor. Requires Mn(2+) as cofactor.

The protein resides in the cytoplasm. The enzyme catalyses 2 D-alanine + ATP = D-alanyl-D-alanine + ADP + phosphate + H(+). It participates in cell wall biogenesis; peptidoglycan biosynthesis. Functionally, cell wall formation. The chain is D-alanine--D-alanine ligase from Pelotomaculum thermopropionicum (strain DSM 13744 / JCM 10971 / SI).